A 269-amino-acid chain; its full sequence is Tryptophan synthase alpha chain (269 aa).

Catalysis depends on proton acceptor residues E49 and D60.

It belongs to the TrpA family. Tetramer of two alpha and two beta chains.

The catalysed reaction is (1S,2R)-1-C-(indol-3-yl)glycerol 3-phosphate + L-serine = D-glyceraldehyde 3-phosphate + L-tryptophan + H2O. Its pathway is amino-acid biosynthesis; L-tryptophan biosynthesis; L-tryptophan from chorismate: step 5/5. Functionally, the alpha subunit is responsible for the aldol cleavage of indoleglycerol phosphate to indole and glyceraldehyde 3-phosphate. This chain is Tryptophan synthase alpha chain, found in Acidovorax ebreus (strain TPSY) (Diaphorobacter sp. (strain TPSY)).